Reading from the N-terminus, the 248-residue chain is PF03932 family protein CutC (248 aa).

This sequence belongs to the CutC family. In terms of assembly, homodimer.

The protein resides in the cytoplasm. This chain is PF03932 family protein CutC, found in Salmonella paratyphi B (strain ATCC BAA-1250 / SPB7).